The primary structure comprises 267 residues: tRNA (guanine-N(1)-)-methyltransferase (267 aa).

Residues glycine 119 and isoleucine 139–leucine 144 each bind S-adenosyl-L-methionine.

It belongs to the RNA methyltransferase TrmD family. In terms of assembly, homodimer.

It is found in the cytoplasm. The enzyme catalyses guanosine(37) in tRNA + S-adenosyl-L-methionine = N(1)-methylguanosine(37) in tRNA + S-adenosyl-L-homocysteine + H(+). Its function is as follows. Specifically methylates guanosine-37 in various tRNAs. The protein is tRNA (guanine-N(1)-)-methyltransferase of Chromohalobacter salexigens (strain ATCC BAA-138 / DSM 3043 / CIP 106854 / NCIMB 13768 / 1H11).